We begin with the raw amino-acid sequence, 219 residues long: Redox-sensing transcriptional repressor Rex (219 aa).

Positions 17-56 (LYYRIFKRFHRENIVKTSSKQIAEAIGIDPATVRRDFSYF) form a DNA-binding region, H-T-H motif. Position 91 to 96 (91 to 96 (GVGNIG)) interacts with NAD(+).

This sequence belongs to the transcriptional regulatory Rex family. In terms of assembly, homodimer.

It localises to the cytoplasm. Its function is as follows. Modulates transcription in response to changes in cellular NADH/NAD(+) redox state. The sequence is that of Redox-sensing transcriptional repressor Rex from Streptococcus thermophilus (strain ATCC BAA-491 / LMD-9).